Reading from the N-terminus, the 156-residue chain is Small ribosomal subunit protein uS7 (156 aa).

This sequence belongs to the universal ribosomal protein uS7 family. Part of the 30S ribosomal subunit. Contacts proteins S9 and S11.

One of the primary rRNA binding proteins, it binds directly to 16S rRNA where it nucleates assembly of the head domain of the 30S subunit. Is located at the subunit interface close to the decoding center, probably blocks exit of the E-site tRNA. This chain is Small ribosomal subunit protein uS7, found in Alkalilimnicola ehrlichii (strain ATCC BAA-1101 / DSM 17681 / MLHE-1).